A 189-amino-acid polypeptide reads, in one-letter code: Peptidyl-tRNA hydrolase (189 aa).

Y15 provides a ligand contact to tRNA. H20 serves as the catalytic Proton acceptor. F66, N68, and N114 together coordinate tRNA.

The protein belongs to the PTH family. Monomer.

The protein resides in the cytoplasm. The catalysed reaction is an N-acyl-L-alpha-aminoacyl-tRNA + H2O = an N-acyl-L-amino acid + a tRNA + H(+). Functionally, hydrolyzes ribosome-free peptidyl-tRNAs (with 1 or more amino acids incorporated), which drop off the ribosome during protein synthesis, or as a result of ribosome stalling. Catalyzes the release of premature peptidyl moieties from peptidyl-tRNA molecules trapped in stalled 50S ribosomal subunits, and thus maintains levels of free tRNAs and 50S ribosomes. The chain is Peptidyl-tRNA hydrolase from Dichelobacter nodosus (strain VCS1703A).